A 374-amino-acid chain; its full sequence is DNA replication and repair protein RecF (374 aa).

30-37 contributes to the ATP binding site; that stretch reads GPNAQGKT.

This sequence belongs to the RecF family.

Its subcellular location is the cytoplasm. Its function is as follows. The RecF protein is involved in DNA metabolism; it is required for DNA replication and normal SOS inducibility. RecF binds preferentially to single-stranded, linear DNA. It also seems to bind ATP. This chain is DNA replication and repair protein RecF, found in Lactobacillus gasseri (strain ATCC 33323 / DSM 20243 / BCRC 14619 / CIP 102991 / JCM 1131 / KCTC 3163 / NCIMB 11718 / NCTC 13722 / AM63).